Reading from the N-terminus, the 309-residue chain is NAD-dependent protein deacylase sirtuin-5B, mitochondrial (309 aa).

A mitochondrion-targeting transit peptide spans 1–35 (MILLPFHTRRLVSHVYCGLKPASQNKGIALEMTRP). The Deacetylase sirtuin-type domain maps to 36 to 306 (SSNLANFREA…PPALARHETE (271 aa)). 57–76 (GAGVSAESGVPTIIGAGGYW) provides a ligand contact to NAD(+). Residues Tyr101 and Arg104 each contribute to the substrate site. 139–142 (QNID) lines the NAD(+) pocket. Catalysis depends on His157, which acts as the Proton acceptor. Zn(2+) is bound by residues Cys165, Cys168, Cys206, and Cys211. NAD(+)-binding positions include 248–250 (GTS), 274–276 (NME), and Cys292.

It belongs to the sirtuin family. Class III subfamily. It depends on Zn(2+) as a cofactor.

The protein localises to the mitochondrion. It localises to the cytoplasm. It is found in the cytosol. Its subcellular location is the nucleus. It catalyses the reaction N(6)-malonyl-L-lysyl-[protein] + NAD(+) + H2O = 2''-O-malonyl-ADP-D-ribose + nicotinamide + L-lysyl-[protein]. The catalysed reaction is N(6)-succinyl-L-lysyl-[protein] + NAD(+) + H2O = 2''-O-succinyl-ADP-D-ribose + nicotinamide + L-lysyl-[protein]. It carries out the reaction N(6)-glutaryl-L-lysyl-[protein] + NAD(+) + H2O = 2''-O-glutaryl-ADP-D-ribose + nicotinamide + L-lysyl-[protein]. Its function is as follows. NAD-dependent lysine demalonylase, desuccinylase and deglutarylase that specifically removes malonyl, succinyl and glutaryl groups on target proteins. Has weak NAD-dependent protein deacetylase activity; however this activity may not be physiologically relevant in vivo. The sequence is that of NAD-dependent protein deacylase sirtuin-5B, mitochondrial (sirt5-b) from Xenopus laevis (African clawed frog).